Here is a 463-residue protein sequence, read N- to C-terminus: Phosphomannomutase (463 aa).

Catalysis depends on serine 103, which acts as the Phosphoserine intermediate. Residues serine 103, aspartate 248, aspartate 250, and aspartate 252 each coordinate Mg(2+).

It belongs to the phosphohexose mutase family. Mg(2+) is required as a cofactor.

The protein resides in the cell membrane. It catalyses the reaction alpha-D-mannose 1-phosphate = D-mannose 6-phosphate. Its pathway is nucleotide-sugar biosynthesis; GDP-alpha-D-mannose biosynthesis; alpha-D-mannose 1-phosphate from D-fructose 6-phosphate: step 2/2. The protein operates within bacterial outer membrane biogenesis; LPS O-antigen biosynthesis. Its function is as follows. Involved in GDP-mannose biosynthesis which serves as the activated sugar nucleotide precursor for mannose residues in cell surface polysaccharides. The chain is Phosphomannomutase (rfbB) from Vibrio cholerae serotype O1 (strain ATCC 39315 / El Tor Inaba N16961).